Consider the following 342-residue polypeptide: Dihydroorotase (342 aa).

Zn(2+) is bound by residues His-13 and His-15. Residues 15-17 (HLR) and Asn-41 each bind substrate. Positions 98, 135, and 173 each coordinate Zn(2+). At Lys-98 the chain carries N6-carboxylysine. His-135 provides a ligand contact to substrate. Residue Leu-218 participates in substrate binding. Asp-246 is a Zn(2+) binding site. Asp-246 is an active-site residue. Substrate-binding residues include His-250 and Ala-262.

It belongs to the metallo-dependent hydrolases superfamily. DHOase family. Class II DHOase subfamily. In terms of assembly, homodimer. Zn(2+) is required as a cofactor.

The catalysed reaction is (S)-dihydroorotate + H2O = N-carbamoyl-L-aspartate + H(+). It participates in pyrimidine metabolism; UMP biosynthesis via de novo pathway; (S)-dihydroorotate from bicarbonate: step 3/3. Functionally, catalyzes the reversible cyclization of carbamoyl aspartate to dihydroorotate. The polypeptide is Dihydroorotase (Vibrio vulnificus (strain YJ016)).